Reading from the N-terminus, the 266-residue chain is Probable sulfate transport system permease protein cysT (266 aa).

The next 7 membrane-spanning stretches (helical) occupy residues 12–32, 59–79, 91–111, 129–149, 181–201, 206–226, and 236–256; these read ILLF…FLLI, MAFY…WVLT, AAVD…LATV, IVFT…PFVI, VILP…FSRA, GSIV…SVLI, and LGAS…LLLI. The 205-residue stretch at 53–257 folds into the ABC transmembrane type-1 domain; the sequence is YLLTVQMAFY…IALFTLLLIN (205 aa).

Belongs to the binding-protein-dependent transport system permease family. CysTW subfamily.

It localises to the plastid. It is found in the chloroplast membrane. Functionally, part of the ABC transporter complex cysAWTP (TC 3.A.1.6.1) involved in sulfate/thiosulfate import. Probably responsible for the translocation of the substrate across the membrane. This is Probable sulfate transport system permease protein cysT (cysT) from Chlorella vulgaris (Green alga).